The chain runs to 400 residues: NADH-ubiquinone oxidoreductase 49 kDa subunit (400 aa).

This sequence belongs to the complex I 49 kDa subunit family.

The protein localises to the mitochondrion. It carries out the reaction a ubiquinone + NADH + 5 H(+)(in) = a ubiquinol + NAD(+) + 4 H(+)(out). In terms of biological role, core subunit of the mitochondrial membrane respiratory chain NADH dehydrogenase (Complex I) that is believed to belong to the minimal assembly required for catalysis. Complex I functions in the transfer of electrons from NADH to the respiratory chain. The immediate electron acceptor for the enzyme is believed to be ubiquinone. Component of the iron-sulfur (IP) fragment of the enzyme. Component of the iron-sulfur (IP) fragment of the enzyme. The chain is NADH-ubiquinone oxidoreductase 49 kDa subunit (NAD7) from Paramecium tetraurelia.